We begin with the raw amino-acid sequence, 407 residues long: V-set and immunoglobulin domain-containing protein 1 (407 aa).

An N-terminal signal peptide occupies residues 1-22 (MMVFAFWKVFLILNCLAGQVSM). Positions 23-134 (VQVTIPDTFV…HFVGKNQGLL (112 aa)) constitute an Ig-like V-type domain. At 23–234 (VQVTIPDTFV…EIDLTSSHPE (212 aa)) the chain is on the extracellular side. Asn-39 is a glycosylation site (N-linked (GlcNAc...) asparagine). Disulfide bonds link Cys-44-Cys-118 and Cys-163-Cys-213. The 85-residue stretch at 145-229 (PFCTIQGRPE…GNSSCEIDLT (85 aa)) folds into the Ig-like C2-type domain. Residues Asn-202 and Asn-221 are each glycosylated (N-linked (GlcNAc...) asparagine). Residues 235–255 (VGIIIGALVGALIGAAVIICV) form a helical membrane-spanning segment. Residues 256–407 (VYFARNKVKS…SKAGEDTVKA (152 aa)) are Cytoplasmic-facing. Disordered stretches follow at residues 268 to 289 (QKNL…PQQS) and 318 to 407 (TAVL…TVKA). 2 positions are modified to phosphoserine: Ser-273 and Ser-274. Positions 361-371 (DPETETEPEPE) are enriched in acidic residues.

Its subcellular location is the membrane. This chain is V-set and immunoglobulin domain-containing protein 1 (Vsig1), found in Mus musculus (Mouse).